The following is a 215-amino-acid chain: MTQSLADMRRDYTRDGLAEAQAPGEPFALFHHWFADAVKTEQLPVEANAMTLATVDADGRPHCRVLLLKALDGRGFTFFTNYESAKGQHIAANPFAAMTFFWPALERQVRIEGRVEKVTAKESDDYYQVRPLGSRLGAWASPQSRVIADREELEGLVKATEARFSDTQPHCPEHWGGYRLLPERIEFWQGRASRLHDRLNYRLVDGQWQRERLAP.

Residues Arg9–Tyr12 and Lys69 contribute to the substrate site. Residues Arg64–Lys69, Phe79–Thr80, Lys86, and Gln108 contribute to the FMN site. Positions 126, 130, and 134 each coordinate substrate. FMN-binding positions include Gln143–Ser144 and Trp188. A substrate-binding site is contributed by Arg194–His196. Arg198 provides a ligand contact to FMN.

The protein belongs to the pyridoxamine 5'-phosphate oxidase family. As to quaternary structure, homodimer. The cofactor is FMN.

The catalysed reaction is pyridoxamine 5'-phosphate + O2 + H2O = pyridoxal 5'-phosphate + H2O2 + NH4(+). The enzyme catalyses pyridoxine 5'-phosphate + O2 = pyridoxal 5'-phosphate + H2O2. It participates in cofactor metabolism; pyridoxal 5'-phosphate salvage; pyridoxal 5'-phosphate from pyridoxamine 5'-phosphate: step 1/1. It functions in the pathway cofactor metabolism; pyridoxal 5'-phosphate salvage; pyridoxal 5'-phosphate from pyridoxine 5'-phosphate: step 1/1. Catalyzes the oxidation of either pyridoxine 5'-phosphate (PNP) or pyridoxamine 5'-phosphate (PMP) into pyridoxal 5'-phosphate (PLP). This Pseudomonas entomophila (strain L48) protein is Pyridoxine/pyridoxamine 5'-phosphate oxidase.